A 296-amino-acid polypeptide reads, in one-letter code: Chelated iron transport system membrane protein YfeB (296 aa).

An ABC transporter domain is found at 11–246 (LVVDNVTVTY…NLEMTFGGVL (236 aa)). 44–51 (GVNGSGKS) provides a ligand contact to ATP. The disordered stretch occupies residues 276–296 (VFYGHTKNDPPAQSQSKEQNS). Polar residues predominate over residues 286 to 296 (PAQSQSKEQNS).

This sequence belongs to the ABC transporter superfamily.

The protein resides in the cell inner membrane. In terms of biological role, part of an ATP-driven transport system YfeABCD for chelated iron. This chain is Chelated iron transport system membrane protein YfeB (yfeB), found in Yersinia pestis.